The primary structure comprises 126 residues: MSKPKRERSLPDNEAKAVARMLRVSPQKLNLVAQMIRGRKASAALADLQFSRKRIAVDVKKCLESAIANAENNHELEVDDLVVSQAFVGKGIVMKRFSPRGRGRSGRVFKPFSQLTIIVRQVEASA.

The protein belongs to the universal ribosomal protein uL22 family. As to quaternary structure, part of the 50S ribosomal subunit.

This protein binds specifically to 23S rRNA; its binding is stimulated by other ribosomal proteins, e.g. L4, L17, and L20. It is important during the early stages of 50S assembly. It makes multiple contacts with different domains of the 23S rRNA in the assembled 50S subunit and ribosome. Its function is as follows. The globular domain of the protein is located near the polypeptide exit tunnel on the outside of the subunit, while an extended beta-hairpin is found that lines the wall of the exit tunnel in the center of the 70S ribosome. This is Large ribosomal subunit protein uL22 from Bradyrhizobium sp. (strain BTAi1 / ATCC BAA-1182).